A 527-amino-acid chain; its full sequence is Bifunctional purine biosynthesis protein PurH (527 aa).

The MGS-like domain occupies 1-149 (MASDFLPVRR…KNFARVAVAT (149 aa)).

This sequence belongs to the PurH family.

It carries out the reaction (6R)-10-formyltetrahydrofolate + 5-amino-1-(5-phospho-beta-D-ribosyl)imidazole-4-carboxamide = 5-formamido-1-(5-phospho-D-ribosyl)imidazole-4-carboxamide + (6S)-5,6,7,8-tetrahydrofolate. The catalysed reaction is IMP + H2O = 5-formamido-1-(5-phospho-D-ribosyl)imidazole-4-carboxamide. It functions in the pathway purine metabolism; IMP biosynthesis via de novo pathway; 5-formamido-1-(5-phospho-D-ribosyl)imidazole-4-carboxamide from 5-amino-1-(5-phospho-D-ribosyl)imidazole-4-carboxamide (10-formyl THF route): step 1/1. The protein operates within purine metabolism; IMP biosynthesis via de novo pathway; IMP from 5-formamido-1-(5-phospho-D-ribosyl)imidazole-4-carboxamide: step 1/1. This Xanthomonas euvesicatoria pv. vesicatoria (strain 85-10) (Xanthomonas campestris pv. vesicatoria) protein is Bifunctional purine biosynthesis protein PurH.